A 538-amino-acid polypeptide reads, in one-letter code: Bifunctional purine biosynthesis protein PurH (538 aa).

The MGS-like domain maps to 6–158 (KHIPAPDLHR…KNHAYVATVV (153 aa)).

This sequence belongs to the PurH family.

It carries out the reaction (6R)-10-formyltetrahydrofolate + 5-amino-1-(5-phospho-beta-D-ribosyl)imidazole-4-carboxamide = 5-formamido-1-(5-phospho-D-ribosyl)imidazole-4-carboxamide + (6S)-5,6,7,8-tetrahydrofolate. The enzyme catalyses IMP + H2O = 5-formamido-1-(5-phospho-D-ribosyl)imidazole-4-carboxamide. It participates in purine metabolism; IMP biosynthesis via de novo pathway; 5-formamido-1-(5-phospho-D-ribosyl)imidazole-4-carboxamide from 5-amino-1-(5-phospho-D-ribosyl)imidazole-4-carboxamide (10-formyl THF route): step 1/1. It functions in the pathway purine metabolism; IMP biosynthesis via de novo pathway; IMP from 5-formamido-1-(5-phospho-D-ribosyl)imidazole-4-carboxamide: step 1/1. This is Bifunctional purine biosynthesis protein PurH from Brucella melitensis biotype 2 (strain ATCC 23457).